Reading from the N-terminus, the 116-residue chain is MSFNEQQCKQPCVPPPCLQKTQEQCQAKAEEVCLPPCQDPCQEKCPTKVQEVCVPQCQALSQDNCPQQSQDPCLPLCPDQCPSQCTEPCQELSQTKCVEVCPQKIQEKCLPPGKGK.

The sequence is that of Proline-rich protein 9 (PRR9) from Bos taurus (Bovine).